We begin with the raw amino-acid sequence, 322 residues long: Methionyl-tRNA formyltransferase (322 aa).

112–115 contributes to the (6S)-5,6,7,8-tetrahydrofolate binding site; that stretch reads SLLP.

This sequence belongs to the Fmt family.

The enzyme catalyses L-methionyl-tRNA(fMet) + (6R)-10-formyltetrahydrofolate = N-formyl-L-methionyl-tRNA(fMet) + (6S)-5,6,7,8-tetrahydrofolate + H(+). Attaches a formyl group to the free amino group of methionyl-tRNA(fMet). The formyl group appears to play a dual role in the initiator identity of N-formylmethionyl-tRNA by promoting its recognition by IF2 and preventing the misappropriation of this tRNA by the elongation apparatus. The chain is Methionyl-tRNA formyltransferase from Synechococcus sp. (strain JA-2-3B'a(2-13)) (Cyanobacteria bacterium Yellowstone B-Prime).